Reading from the N-terminus, the 229-residue chain is DNA repair protein RecO (229 aa).

The protein belongs to the RecO family.

Its function is as follows. Involved in DNA repair and RecF pathway recombination. This is DNA repair protein RecO from Legionella pneumophila (strain Lens).